The following is a 305-amino-acid chain: 5'-hydroxyaverantin dehydrogenase stcG (305 aa).

NADP(+)-binding residues include Ser-25, Leu-27, Gln-48, Asp-68, Tyr-186, Lys-190, and Ser-221. Tyr-186 (proton acceptor) is an active-site residue. The active-site Lowers pKa of active site Tyr is the Lys-190.

Belongs to the short-chain dehydrogenases/reductases (SDR) family.

It catalyses the reaction (1'S,5'S)-5'-hydroxyaverantin + NAD(+) = (S)-5'-oxoaverantin + NADH + H(+). The enzyme catalyses (1'S,5'R)-5'-hydroxyaverantin + NAD(+) = (S)-5'-oxoaverantin + NADH + 2 H(+). It functions in the pathway mycotoxin biosynthesis; sterigmatocystin biosynthesis. Its function is as follows. 5'-hydroxyaverantin dehydrogenase; part of the gene cluster that mediates the biosynthesis of sterigmatocystin (ST), a polyketide-derived furanocoumarin which is part of the most toxic and carcinogenic compounds among the known mycotoxins. The first step in the biosynthesis of sterigmatocystin is the production of hexanoate by the fatty acid synthase (FAS) units stcJ and stcK. The polyketide backbone is assembled by the non-reducing polyketide synthase stcA by condensation of the starter hexanoyl-CoA and 7 malonyl-CoA extender units followed by cyclization and release of norsolorinic acid. Norsolorinic acid is the first stable intermediate in the biosynthesis of sterigmatocystin and is converted into averantin (AVN) by the ketoreductase stcE which reduces the hexanoate ketone to an alcohol. Averantin is then oxidized into 5'-hydroxyaverantin (HAVN) by the cytochrome P450 monooxygenase stcF. 5'-hydroxyaverantin is further converted to 5'-oxyaverantin (OAVN) by the 5'-hydroxyaverantin dehydrogenase stcG. The next step is the conversion of OAVN into averufin (AVF) which is catalyzed by a yet to be identified enzyme. The cytochrome P450 monooxygenase stcB and the flavin-binding monooxygenase stcW are both required for the conversion of averufin to 1-hydroxyversicolorone. The esterase stcI probably catalyzes the formation of versiconal hemiacetal acetate from 1-hydroxyversicolorone. The oxydoreductase stcN then probably catalyzes the biosynthetic step from versiconal to versicolorin B (VERB). The next step is performed by the versicolorin B desaturase stcL to produce versicolorin A (VERA). The ketoreductase stcU and the cytochrome P450 monooxygenase stcS are involved in the conversion of versicolorin A to demethylsterigmatocystin. The Baeyer-Villiger oxidas stcQ and the reductase stcR might be involved in the biosynthetic step from versicolorin A to demethylsterigmatocystin. The final step in the biosynthesis of sterigmatocystin is the methylation of demethylsterigmatocystin catalyzed by the methyltransferase stcP. This is 5'-hydroxyaverantin dehydrogenase stcG from Emericella nidulans (strain FGSC A4 / ATCC 38163 / CBS 112.46 / NRRL 194 / M139) (Aspergillus nidulans).